The chain runs to 261 residues: 2,3-dihydro-2,3-dihydroxybenzoate dehydrogenase (261 aa).

NAD(+) is bound at residue phenylalanine 12–alanine 36. Serine 144 is a binding site for substrate. The active-site Proton acceptor is tyrosine 157.

Belongs to the short-chain dehydrogenases/reductases (SDR) family.

The protein resides in the cytoplasm. It catalyses the reaction (2S,3S)-2,3-dihydroxy-2,3-dihydrobenzoate + NAD(+) = 2,3-dihydroxybenzoate + NADH + H(+). It participates in siderophore biosynthesis; bacillibactin biosynthesis. This is 2,3-dihydro-2,3-dihydroxybenzoate dehydrogenase (dhbA) from Bacillus subtilis (strain 168).